The following is a 228-amino-acid chain: Triosephosphate isomerase (228 aa).

Position 12–14 (12–14 (NFK)) interacts with substrate. Histidine 96 (electrophile) is an active-site residue. Residue glutamate 144 is the Proton acceptor of the active site. Residues isoleucine 149, glycine 184, and 205-206 (AS) each bind substrate.

It belongs to the triosephosphate isomerase family. Homotetramer; dimer of dimers.

The protein resides in the cytoplasm. The enzyme catalyses D-glyceraldehyde 3-phosphate = dihydroxyacetone phosphate. It participates in carbohydrate biosynthesis; gluconeogenesis. Its pathway is carbohydrate degradation; glycolysis; D-glyceraldehyde 3-phosphate from glycerone phosphate: step 1/1. Functionally, involved in the gluconeogenesis. Catalyzes stereospecifically the conversion of dihydroxyacetone phosphate (DHAP) to D-glyceraldehyde-3-phosphate (G3P). This chain is Triosephosphate isomerase, found in Pyrococcus furiosus (strain ATCC 43587 / DSM 3638 / JCM 8422 / Vc1).